The chain runs to 139 residues: Nucleoside diphosphate kinase (139 aa).

K9, F57, R85, T91, R102, and N112 together coordinate ATP. The active-site Pros-phosphohistidine intermediate is H115.

This sequence belongs to the NDK family. As to quaternary structure, homotetramer. The cofactor is Mg(2+).

It localises to the cytoplasm. It carries out the reaction a 2'-deoxyribonucleoside 5'-diphosphate + ATP = a 2'-deoxyribonucleoside 5'-triphosphate + ADP. The enzyme catalyses a ribonucleoside 5'-diphosphate + ATP = a ribonucleoside 5'-triphosphate + ADP. Its function is as follows. Major role in the synthesis of nucleoside triphosphates other than ATP. The ATP gamma phosphate is transferred to the NDP beta phosphate via a ping-pong mechanism, using a phosphorylated active-site intermediate. The polypeptide is Nucleoside diphosphate kinase (Desulfosudis oleivorans (strain DSM 6200 / JCM 39069 / Hxd3) (Desulfococcus oleovorans)).